A 616-amino-acid polypeptide reads, in one-letter code: MITTVLRRSLLDASKRNLSASLTSINTVLFHNLAPAATRVSDLALIGSSDVKAGFPFGVEAKGIHFQSGPLDFRASMVSQAGFAISESSERRVGDSESVGGDGLAISELGISPEIVKALSSKGIEKLFPIQKAVLEPAMEGRDMIGRARTGTGKTLAFGIPIIDKIIKYNAKHGRGRNPLCLVLAPTRELARQVEKEFRESAPSLDTICLYGGTPIGQQMRQLDYGVDVAVGTPGRVIDLMKRGALNLSEVQFVVLDEADQMLQVGFAEDVEIILEKLPEKRQSMMFSATMPSWIRSLTKKYLNNPLTVDLVGDSDQKLADGITTYSIIADSYGRASIIGPLVTEHAKGGKCIVFTQTKRDADRLSYALARSFKCEALHGDISQSQRERTLAGFRDGHFNILVATDVAARGLDVPNVDLIIHYELPNNTETFVHRTGRTGRAGKKGSAILIYSQDQSRAVKIIEREVGSRFTELPSIAVERGSASMFEGIGSRSGGSFGGGMRDRGSSFGGRSGGGGYGGSSGGYGGGRSGGSSNRYSGDSDRSGFGSFGMRSPEGYGSDRSSQSGGRSSFGGGRSGGSSNNRSSGFGDFGSDRSSQSGGRSSFGGFGSNDGKRSY.

The N-terminal 81 residues, 1–81 (MITTVLRRSL…DFRASMVSQA (81 aa)), are a transit peptide targeting the mitochondrion. The Q motif signature appears at 104-132 (LAISELGISPEIVKALSSKGIEKLFPIQK). Residues 135 to 309 (LEPAMEGRDM…KKYLNNPLTV (175 aa)) form the Helicase ATP-binding domain. Position 148–155 (148–155 (ARTGTGKT)) interacts with ATP. The short motif at 257–260 (DEAD) is the DEAD box element. In terms of domain architecture, Helicase C-terminal spans 338–482 (IIGPLVTEHA…ELPSIAVERG (145 aa)). The tract at residues 489–616 (GIGSRSGGSF…FGSNDGKRSY (128 aa)) is disordered. Composition is skewed to gly residues over residues 492–501 (SRSGGSFGGG) and 508–531 (SFGG…GRSG). Low complexity-rich tracts occupy residues 532 to 568 (GSSN…SGGR) and 578 to 587 (GSSNNRSSGF).

Belongs to the DEAD box helicase family. DDX21/DDX50 subfamily.

The protein localises to the mitochondrion. It catalyses the reaction ATP + H2O = ADP + phosphate + H(+). This is DEAD-box ATP-dependent RNA helicase 53, mitochondrial (RH53) from Arabidopsis thaliana (Mouse-ear cress).